A 354-amino-acid polypeptide reads, in one-letter code: Protein-glutamate methylesterase/protein-glutamine glutaminase 2 (354 aa).

In terms of domain architecture, Response regulatory spans 5-122; that stretch reads RVLIVDDSAL…SLKIKEVAEE (118 aa). The residue at position 56 (Asp-56) is a 4-aspartylphosphate. A CheB-type methylesterase domain is found at 159-354; it reads PDTSFKKLIL…IADRIVELVR (196 aa). Catalysis depends on residues Ser-172, His-199, and Asp-298.

Belongs to the CheB family. In terms of processing, phosphorylated by CheA. Phosphorylation of the N-terminal regulatory domain activates the methylesterase activity.

It localises to the cytoplasm. The enzyme catalyses [protein]-L-glutamate 5-O-methyl ester + H2O = L-glutamyl-[protein] + methanol + H(+). It carries out the reaction L-glutaminyl-[protein] + H2O = L-glutamyl-[protein] + NH4(+). Functionally, involved in chemotaxis. Part of a chemotaxis signal transduction system that modulates chemotaxis in response to various stimuli. Catalyzes the demethylation of specific methylglutamate residues introduced into the chemoreceptors (methyl-accepting chemotaxis proteins or MCP) by CheR. Also mediates the irreversible deamidation of specific glutamine residues to glutamic acid. The protein is Protein-glutamate methylesterase/protein-glutamine glutaminase 2 of Carboxydothermus hydrogenoformans (strain ATCC BAA-161 / DSM 6008 / Z-2901).